Here is a 186-residue protein sequence, read N- to C-terminus: Single-stranded DNA-binding protein 1 (186 aa).

Positions 1-108 (MDATVTVVGN…LEIDEIGPTL (108 aa)) constitute an SSB domain. The interval 120 to 186 (QAGHGVSPDP…EDFDSDEVPF (67 aa)) is disordered. Over residues 132–141 (DSQTGQGIDS) the composition is skewed to polar residues. Positions 175 to 186 (SYEDFDSDEVPF) are enriched in acidic residues.

Homotetramer.

This Tropheryma whipplei (strain TW08/27) (Whipple's bacillus) protein is Single-stranded DNA-binding protein 1 (ssb1).